We begin with the raw amino-acid sequence, 167 residues long: MQKIQSNQIQEQDLTPELKKWLYASGSLTQQLTDLADGLFTVEPIQEKYQRMSFMDSRWMRMPAYHVAWVRESLLYGCEQQPWVKAKSIFPVLSLQKKARIFKHIGKKPIGRFLFQRTTPLCERRVIRLEEGWTRQSCYTWHGCKFIVQETFLASFEQYIQHHSHSI.

The substrate site is built by Arg71, Ile110, and Glu150.

The protein belongs to the UbiC family.

The protein resides in the cytoplasm. It catalyses the reaction chorismate = 4-hydroxybenzoate + pyruvate. It functions in the pathway cofactor biosynthesis; ubiquinone biosynthesis. In terms of biological role, removes the pyruvyl group from chorismate, with concomitant aromatization of the ring, to provide 4-hydroxybenzoate (4HB) for the ubiquinone pathway. The protein is Probable chorismate pyruvate-lyase of Acinetobacter baylyi (strain ATCC 33305 / BD413 / ADP1).